A 133-amino-acid polypeptide reads, in one-letter code: MKDNIELTIFTPEKNIKIGEIKEVITEGLDGDLAILPNHVNMITYLKPTITKYIDLNGNKNNIFTSSGVLKVEDNKVYIICDASEKPEDIDIKRAENAKKRAEERLRNKKEIDVKRAELALFRSIARIKIKEL.

The protein belongs to the ATPase epsilon chain family. F-type ATPases have 2 components, CF(1) - the catalytic core - and CF(0) - the membrane proton channel. CF(1) has five subunits: alpha(3), beta(3), gamma(1), delta(1), epsilon(1). CF(0) has three main subunits: a, b and c.

It is found in the cell membrane. Its function is as follows. Produces ATP from ADP in the presence of a proton gradient across the membrane. This Clostridium botulinum (strain 657 / Type Ba4) protein is ATP synthase epsilon chain.